We begin with the raw amino-acid sequence, 86 residues long: MeuNaTxbeta-1 (86 aa).

Positions 1 to 20 (MMKIIIFLIVSSLVLIGVKT) are cleaved as a signal peptide. An LCN-type CS-alpha/beta domain is found at 21-83 (DNGYLLDKYT…LWHYETNKCN (63 aa)). 4 disulfides stabilise this stretch: Cys-32–Cys-82, Cys-36–Cys-57, Cys-43–Cys-64, and Cys-47–Cys-66.

In terms of tissue distribution, expressed by the venom gland.

The protein resides in the secreted. Functionally, inhibits sodium channels (Nav). Also moderately inhibits human calcium-activated potassium channel KCa1.1/KCNMA1/BK (41.9% decrease at 2 uM toxin concentration). Shows moderate antimicrobial activity against both Gram-positive and -negative bacteria. In Mesobuthus eupeus (Lesser Asian scorpion), this protein is MeuNaTxbeta-1.